We begin with the raw amino-acid sequence, 244 residues long: MSGPQGSDPRQPWQPPGQGADHSSDPTVAAGYPWQQQPTQEATWQAPAYTPQYQQPADPAYPQQYPQPTPGYAQPEQFGAQPTQLGVPGQYGQYQQPGQYGQPGQYGQPGQYAPPGQYPGQYGPYGQSGQGSKRSVAVIGGVIAVMAVLFIGAVLILGFWAPGFFVTTKLDVIKAQAGVQQVLTDETTGYGAKNVKDVKCNNGSDPTVKKGATFECTVSIDGTSKRVTVTFQDNKGTYEVGRPQ.

The tract at residues 1–127 (MSGPQGSDPR…YPGQYGPYGQ (127 aa)) is disordered. The span at 34-43 (WQQQPTQEAT) shows a compositional bias: polar residues. Composition is skewed to low complexity over residues 45 to 75 (QAPAYTPQYQQPADPAYPQQYPQPTPGYAQP) and 88 to 127 (PGQYGQYQQPGQYGQPGQYGQPGQYAPPGQYPGQYGPYGQ). A helical transmembrane segment spans residues 136–156 (VAVIGGVIAVMAVLFIGAVLI).

It is found in the membrane. This is an uncharacterized protein from Mycobacterium tuberculosis (strain CDC 1551 / Oshkosh).